The following is a 292-amino-acid chain: Ribosomal RNA small subunit methyltransferase H (292 aa).

S-adenosyl-L-methionine contacts are provided by residues 32-34 (GGH), Asp51, Leu87, Asp101, and Gln108.

Belongs to the methyltransferase superfamily. RsmH family.

The protein localises to the cytoplasm. The catalysed reaction is cytidine(1402) in 16S rRNA + S-adenosyl-L-methionine = N(4)-methylcytidine(1402) in 16S rRNA + S-adenosyl-L-homocysteine + H(+). Its function is as follows. Specifically methylates the N4 position of cytidine in position 1402 (C1402) of 16S rRNA. The polypeptide is Ribosomal RNA small subunit methyltransferase H (Pseudothermotoga lettingae (strain ATCC BAA-301 / DSM 14385 / NBRC 107922 / TMO) (Thermotoga lettingae)).